A 937-amino-acid polypeptide reads, in one-letter code: Protein translocase subunit SecA (937 aa).

Residues Gln90, 108–112 (GEGKT), and Asp509 contribute to the ATP site.

This sequence belongs to the SecA family. Monomer and homodimer. Part of the essential Sec protein translocation apparatus which comprises SecA, SecYEG and auxiliary proteins SecDF. Other proteins may also be involved.

The protein localises to the cell inner membrane. It is found in the cellular thylakoid membrane. Its subcellular location is the cytoplasm. It catalyses the reaction ATP + H2O + cellular proteinSide 1 = ADP + phosphate + cellular proteinSide 2.. In terms of biological role, part of the Sec protein translocase complex. Interacts with the SecYEG preprotein conducting channel. Has a central role in coupling the hydrolysis of ATP to the transfer of proteins into and across the cell membrane, serving as an ATP-driven molecular motor driving the stepwise translocation of polypeptide chains across the membrane. Functionally, probably participates in protein translocation into and across both the cytoplasmic and thylakoid membranes in cyanobacterial cells. The chain is Protein translocase subunit SecA from Synechococcus sp. (strain CC9902).